The following is a 54-amino-acid chain: ATP synthase F(0) complex subunit 8 (54 aa).

A helical membrane pass occupies residues 8 to 24 (PWFSIMLLTWFTFSLLI).

It belongs to the ATPase protein 8 family. In terms of assembly, component of the ATP synthase complex composed at least of ATP5F1A/subunit alpha, ATP5F1B/subunit beta, ATP5MC1/subunit c (homooctomer), MT-ATP6/subunit a, MT-ATP8/subunit 8, ATP5ME/subunit e, ATP5MF/subunit f, ATP5MG/subunit g, ATP5MK/subunit k, ATP5MJ/subunit j, ATP5F1C/subunit gamma, ATP5F1D/subunit delta, ATP5F1E/subunit epsilon, ATP5PF/subunit F6, ATP5PB/subunit b, ATP5PD/subunit d, ATP5PO/subunit OSCP. ATP synthase complex consists of a soluble F(1) head domain (subunits alpha(3) and beta(3)) - the catalytic core - and a membrane F(0) domain - the membrane proton channel (subunits c, a, 8, e, f, g, k and j). These two domains are linked by a central stalk (subunits gamma, delta, and epsilon) rotating inside the F1 region and a stationary peripheral stalk (subunits F6, b, d, and OSCP).

Its subcellular location is the mitochondrion membrane. Functionally, subunit 8, of the mitochondrial membrane ATP synthase complex (F(1)F(0) ATP synthase or Complex V) that produces ATP from ADP in the presence of a proton gradient across the membrane which is generated by electron transport complexes of the respiratory chain. ATP synthase complex consist of a soluble F(1) head domain - the catalytic core - and a membrane F(1) domain - the membrane proton channel. These two domains are linked by a central stalk rotating inside the F(1) region and a stationary peripheral stalk. During catalysis, ATP synthesis in the catalytic domain of F(1) is coupled via a rotary mechanism of the central stalk subunits to proton translocation. In vivo, can only synthesize ATP although its ATP hydrolase activity can be activated artificially in vitro. Part of the complex F(0) domain. This chain is ATP synthase F(0) complex subunit 8, found in Gallus gallus (Chicken).